The primary structure comprises 250 residues: Phosphoribosylaminoimidazole-succinocarboxamide synthase (250 aa).

Belongs to the SAICAR synthetase family.

The catalysed reaction is 5-amino-1-(5-phospho-D-ribosyl)imidazole-4-carboxylate + L-aspartate + ATP = (2S)-2-[5-amino-1-(5-phospho-beta-D-ribosyl)imidazole-4-carboxamido]succinate + ADP + phosphate + 2 H(+). It participates in purine metabolism; IMP biosynthesis via de novo pathway; 5-amino-1-(5-phospho-D-ribosyl)imidazole-4-carboxamide from 5-amino-1-(5-phospho-D-ribosyl)imidazole-4-carboxylate: step 1/2. In Bifidobacterium longum subsp. infantis (strain ATCC 15697 / DSM 20088 / JCM 1222 / NCTC 11817 / S12), this protein is Phosphoribosylaminoimidazole-succinocarboxamide synthase.